A 961-amino-acid polypeptide reads, in one-letter code: Exportin-T (961 aa).

This sequence belongs to the exportin family.

The protein resides in the cytoplasm. The protein localises to the nucleus. Its function is as follows. Mediates the nuclear export of aminoacylated tRNAs. The protein is Exportin-T (xpot) of Danio rerio (Zebrafish).